The sequence spans 125 residues: Small ribosomal subunit protein uS12 (125 aa).

The tract at residues 1-26 (MPTINQLVRKSRKTVKAQSDSPALKN) is disordered. At Asp89 the chain carries 3-methylthioaspartic acid.

This sequence belongs to the universal ribosomal protein uS12 family. Part of the 30S ribosomal subunit. Contacts proteins S8 and S17. May interact with IF1 in the 30S initiation complex.

With S4 and S5 plays an important role in translational accuracy. Functionally, interacts with and stabilizes bases of the 16S rRNA that are involved in tRNA selection in the A site and with the mRNA backbone. Located at the interface of the 30S and 50S subunits, it traverses the body of the 30S subunit contacting proteins on the other side and probably holding the rRNA structure together. The combined cluster of proteins S8, S12 and S17 appears to hold together the shoulder and platform of the 30S subunit. The polypeptide is Small ribosomal subunit protein uS12 (Clostridium tetani (strain Massachusetts / E88)).